Reading from the N-terminus, the 155-residue chain is Ribosomal RNA large subunit methyltransferase H (155 aa).

Residues Leu-72, Gly-104, and 123-128 each bind S-adenosyl-L-methionine; that span reads LAKITL.

This sequence belongs to the RNA methyltransferase RlmH family. As to quaternary structure, homodimer.

Its subcellular location is the cytoplasm. It catalyses the reaction pseudouridine(1915) in 23S rRNA + S-adenosyl-L-methionine = N(3)-methylpseudouridine(1915) in 23S rRNA + S-adenosyl-L-homocysteine + H(+). In terms of biological role, specifically methylates the pseudouridine at position 1915 (m3Psi1915) in 23S rRNA. In Mycoplasma mycoides subsp. mycoides SC (strain CCUG 32753 / NCTC 10114 / PG1), this protein is Ribosomal RNA large subunit methyltransferase H.